The following is a 420-amino-acid chain: Protein disulfide isomerase CRELD1 (420 aa).

Positions 1-29 (MAPWPPKGLVPAMLWGLSLFLNLPGPIWL) are cleaved as a signal peptide. The Extracellular segment spans residues 30 to 362 (QPSPPPQSSP…GFFSEMTEDE (333 aa)). Positions 46 to 49 (CHTC) match the CXXC motif. A disulfide bond links Cys46 and Cys49. A glycan (N-linked (GlcNAc...) asparagine) is linked at Asn79. An EGF-like 1 domain is found at 153 to 193 (LPCPGGTERPCGGYGQCEGEGTRGGSGHCDCQAGYGGEACG). 3 disulfides stabilise this stretch: Cys155–Cys169, Cys163–Cys181, and Cys183–Cys192. Asn205 is a glycosylation site (N-linked (GlcNAc...) asparagine). FU repeat units lie at residues 208–256 (HLVC…GANC) and 268–315 (SYEC…EVCP). The CXXC signature appears at 278–281 (CLGC). Intrachain disulfides connect Cys278/Cys281, Cys309/Cys321, Cys314/Cys330, and Cys332/Cys343. The EGF-like 2; calcium-binding domain maps to 305-344 (DVDECETEVCPGENKQCENTEGGYRCICAEGYKQMEGICV). A helical transmembrane segment spans residues 363–383 (LVVLQQMFFGIIICALATLAA). Residue Lys384 is a topological domain, cytoplasmic. Residues 385-405 (GDLVFTAIFIGAVAAMTGYWL) traverse the membrane as a helical segment. Residues 406–420 (SERSDRVLEGFIKGR) lie on the Extracellular side of the membrane.

It belongs to the CRELD family. Highly expressed in fetal lung, liver, kidney, adult heart, brain and skeletal muscle. Weakly expressed in placenta, fetal brain, and adult lung, liver, kidney and pancreas.

It is found in the membrane. The enzyme catalyses Catalyzes the rearrangement of -S-S- bonds in proteins.. In terms of biological role, protein disulfide isomerase. Promotes the localization of acetylcholine receptors (AChRs) to the plasma membrane. The chain is Protein disulfide isomerase CRELD1 (CRELD1) from Homo sapiens (Human).